The sequence spans 20 residues: Cytochrome c oxidase subunit 8B, mitochondrial (20 aa).

The interval 1-20 (LSGKPAKXHLSVGEQAIAMT) is disordered.

Belongs to the cytochrome c oxidase VIII family. As to quaternary structure, component of the cytochrome c oxidase (complex IV, CIV), a multisubunit enzyme composed of 14 subunits. The complex is composed of a catalytic core of 3 subunits MT-CO1, MT-CO2 and MT-CO3, encoded in the mitochondrial DNA, and 11 supernumerary subunits COX4I, COX5A, COX5B, COX6A, COX6B, COX6C, COX7A, COX7B, COX7C, COX8 and NDUFA4, which are encoded in the nuclear genome. The complex exists as a monomer or a dimer and forms supercomplexes (SCs) in the inner mitochondrial membrane with NADH-ubiquinone oxidoreductase (complex I, CI) and ubiquinol-cytochrome c oxidoreductase (cytochrome b-c1 complex, complex III, CIII), resulting in different assemblies (supercomplex SCI(1)III(2)IV(1) and megacomplex MCI(2)III(2)IV(2)).

The protein resides in the mitochondrion inner membrane. It participates in energy metabolism; oxidative phosphorylation. Functionally, component of the cytochrome c oxidase, the last enzyme in the mitochondrial electron transport chain which drives oxidative phosphorylation. The respiratory chain contains 3 multisubunit complexes succinate dehydrogenase (complex II, CII), ubiquinol-cytochrome c oxidoreductase (cytochrome b-c1 complex, complex III, CIII) and cytochrome c oxidase (complex IV, CIV), that cooperate to transfer electrons derived from NADH and succinate to molecular oxygen, creating an electrochemical gradient over the inner membrane that drives transmembrane transport and the ATP synthase. Cytochrome c oxidase is the component of the respiratory chain that catalyzes the reduction of oxygen to water. Electrons originating from reduced cytochrome c in the intermembrane space (IMS) are transferred via the dinuclear copper A center (CU(A)) of subunit 2 and heme A of subunit 1 to the active site in subunit 1, a binuclear center (BNC) formed by heme A3 and copper B (CU(B)). The BNC reduces molecular oxygen to 2 water molecules using 4 electrons from cytochrome c in the IMS and 4 protons from the mitochondrial matrix. The polypeptide is Cytochrome c oxidase subunit 8B, mitochondrial (Oncorhynchus mykiss (Rainbow trout)).